A 184-amino-acid polypeptide reads, in one-letter code: Cytosolic Prostaglandin E synthase (184 aa).

The CS domain occupies 7 to 96 (LIPPPVSWAQ…AAGPYWSSLT (90 aa)). The interval 115–184 (ESDDEEGDQK…EGDKEKKPAA (70 aa)) is disordered. 5 positions are modified to phosphoserine: Ser-116, Ser-127, Ser-135, Ser-156, and Ser-162. A compositionally biased stretch (acidic residues) spans 147-158 (FNVDDEEEDSDD). A compositionally biased stretch (basic and acidic residues) spans 175-184 (EGDKEKKPAA).

The protein belongs to the p23/wos2 family.

The protein resides in the cytoplasm. It carries out the reaction prostaglandin H2 = prostaglandin E2. In terms of biological role, cytosolic prostaglandin synthase that catalyzes the oxidoreduction of prostaglandin endoperoxide H2 (PGH2) to prostaglandin E2 (PGE2). Through production of PGE2 may regulate the activity of non-muscle myosin II in an autocrine or paracrine fashion; this may influence border cell and nurse cell stiffness to facilitate border cell migration during oogenesis. This is Cytosolic Prostaglandin E synthase from Drosophila melanogaster (Fruit fly).